The sequence spans 318 residues: Cytochrome f (318 aa).

Residues 1 to 34 form the signal peptide; the sequence is MQNRNFFEYPKNWIILLIPIFTTFNLLFTSDCYA. 4 residues coordinate heme: Phe35, Cys55, Cys58, and His59. Residues 284 to 303 traverse the membrane as a helical segment; the sequence is LQGLLVFLFLVVLAQVFLVL.

The protein belongs to the cytochrome f family. The 4 large subunits of the cytochrome b6-f complex are cytochrome b6, subunit IV (17 kDa polypeptide, petD), cytochrome f and the Rieske protein, while the 4 small subunits are PetG, PetL, PetM and PetN. The complex functions as a dimer. Heme serves as cofactor.

The protein localises to the plastid. It localises to the chloroplast thylakoid membrane. In terms of biological role, component of the cytochrome b6-f complex, which mediates electron transfer between photosystem II (PSII) and photosystem I (PSI), cyclic electron flow around PSI, and state transitions. In Chaetosphaeridium globosum (Charophycean green alga), this protein is Cytochrome f.